A 425-amino-acid chain; its full sequence is Kynurenine/alpha-aminoadipate aminotransferase, mitochondrial (425 aa).

A mitochondrion-targeting transit peptide spans Met-1–Ala-29. Residue Arg-20 participates in substrate binding. Phosphoserine is present on Ser-40. Lys-69 is modified (N6-acetyllysine). Tyr-74 contributes to the substrate binding site. The residue at position 172 (Lys-172) is an N6-succinyllysine. Residue Lys-179 is modified to N6-acetyllysine. Asn-202 serves as a coordination point for substrate. Lys-263 carries the post-translational modification N6-(pyridoxal phosphate)lysine; alternate. 2 positions are modified to N6-acetyllysine; alternate: Lys-263 and Lys-339. An N6-succinyllysine; alternate mark is found at Lys-263 and Lys-339. The residue at position 351 (Lys-351) is an N6-acetyllysine. Residue Lys-367 is modified to N6-acetyllysine; alternate. An N6-succinyllysine; alternate modification is found at Lys-367. Arg-399 provides a ligand contact to substrate. Lys-422 carries the post-translational modification N6-acetyllysine.

It belongs to the class-I pyridoxal-phosphate-dependent aminotransferase family. Homodimer. The cofactor is pyridoxal 5'-phosphate. As to expression, expressed mainly in kidney and to a lesser amount in liver and brain.

Its subcellular location is the mitochondrion. The catalysed reaction is L-kynurenine + 2-oxoglutarate = kynurenate + L-glutamate + H2O. It carries out the reaction L-2-aminoadipate + 2-oxoglutarate = 2-oxoadipate + L-glutamate. The enzyme catalyses glycine + 2-oxoglutarate = glyoxylate + L-glutamate. It catalyses the reaction L-kynurenine + glyoxylate = kynurenate + glycine + H2O. The catalysed reaction is 3-hydroxy-L-kynurenine + glyoxylate = xanthurenate + glycine + H2O. It carries out the reaction 2-oxohexanoate + L-kynurenine = L-2-aminohexanoate + kynurenate + H2O. The enzyme catalyses 3-phenylpyruvate + L-kynurenine = kynurenate + L-phenylalanine + H2O. It catalyses the reaction 4-methylsulfanyl-2-oxobutanoate + L-kynurenine = kynurenate + L-methionine + H2O. The catalysed reaction is 2-oxo-3-sulfanylpropanoate + L-kynurenine = kynurenate + L-cysteine + H2O. It carries out the reaction indole-3-pyruvate + L-kynurenine = kynurenate + L-tryptophan + H2O. The enzyme catalyses 2-oxopentanoate + L-kynurenine = L-2-aminopentanoate + kynurenate + H2O. It catalyses the reaction 4-methyl-2-oxopentanoate + L-kynurenine = kynurenate + L-leucine + H2O. The catalysed reaction is glyoxylate + L-methionine = 4-methylsulfanyl-2-oxobutanoate + glycine. It carries out the reaction L-2-aminoadipate + glyoxylate = 2-oxoadipate + glycine. The enzyme catalyses L-tyrosine + glyoxylate = 3-(4-hydroxyphenyl)pyruvate + glycine. It catalyses the reaction glyoxylate + L-phenylalanine = 3-phenylpyruvate + glycine. The catalysed reaction is L-tryptophan + glyoxylate = indole-3-pyruvate + glycine. It carries out the reaction L-leucine + glyoxylate = 4-methyl-2-oxopentanoate + glycine. The enzyme catalyses 2-oxobutanoate + L-kynurenine = (2S)-2-aminobutanoate + kynurenate + H2O. It catalyses the reaction 2-oxoadipate + L-kynurenine = L-2-aminoadipate + kynurenate + H2O. The protein operates within amino-acid degradation; L-lysine degradation via saccharopine pathway; glutaryl-CoA from L-lysine: step 4/6. Its function is as follows. Transaminase with broad substrate specificity. Has transaminase activity towards aminoadipate, kynurenine, methionine and glutamate. Shows activity also towards tryptophan, aspartate and hydroxykynurenine. Accepts a variety of oxo-acids as amino-group acceptors, with a preference for 2-oxoglutarate, 2-oxocaproic acid, phenylpyruvate and alpha-oxo-gamma-methiol butyric acid. Can also use glyoxylate as amino-group acceptor (in vitro). This is Kynurenine/alpha-aminoadipate aminotransferase, mitochondrial from Mus musculus (Mouse).